We begin with the raw amino-acid sequence, 475 residues long: Adenosylhomocysteinase (475 aa).

Substrate contacts are provided by threonine 63, aspartate 138, and glutamate 199. Threonine 200–threonine 202 contributes to the NAD(+) binding site. 2 residues coordinate substrate: lysine 229 and aspartate 233. Residues asparagine 234, glycine 263–glycine 268, glutamate 286, asparagine 321, isoleucine 342–histidine 344, and asparagine 389 each bind NAD(+).

Belongs to the adenosylhomocysteinase family. The cofactor is NAD(+).

The protein localises to the cytoplasm. The catalysed reaction is S-adenosyl-L-homocysteine + H2O = L-homocysteine + adenosine. It participates in amino-acid biosynthesis; L-homocysteine biosynthesis; L-homocysteine from S-adenosyl-L-homocysteine: step 1/1. Its function is as follows. May play a key role in the regulation of the intracellular concentration of adenosylhomocysteine. This Solibacter usitatus (strain Ellin6076) protein is Adenosylhomocysteinase.